Reading from the N-terminus, the 328-residue chain is Lytic polysaccharide monooxygenase aasB (328 aa).

The signal sequence occupies residues 1–18; that stretch reads MKAFFAISASTLLATVHG. Cu(2+) is bound at residue His19. Cys40 and Cys43 are joined by a disulfide. A glycan (N-linked (GlcNAc...) asparagine) is linked at Asn54. 6 disulfides stabilise this stretch: Cys66-Cys245, Cys102-Cys203, Cys118-Cys145, Cys153-Cys161, Cys167-Cys173, and Cys181-Cys192. His109 is a binding site for Cu(2+). Tyr242 is a binding site for Cu(2+). Asn306 carries N-linked (GlcNAc...) asparagine glycosylation.

It belongs to the polysaccharide monooxygenase AA13 family. Requires Cu(2+) as cofactor.

It localises to the secreted. The enzyme catalyses starch + reduced acceptor + O2 = D-glucono-1,5-lactone-terminated malto-oligosaccharides + short-chain malto-oligosaccharides + acceptor + H2O.. In terms of biological role, lytic polysaccharide monooxygenase involved in breakdown of granular resistant starch. This Emericella nidulans (strain FGSC A4 / ATCC 38163 / CBS 112.46 / NRRL 194 / M139) (Aspergillus nidulans) protein is Lytic polysaccharide monooxygenase aasB.